The primary structure comprises 708 residues: Pre-mRNA-splicing factor SPP382 (708 aa).

Residues 61–108 (TYGIGAKLLSSMGYVAGKGLGKDGSGITTPIETQSRPMHNAGLGMFSN) form the G-patch domain.

In terms of assembly, component of the NTR complex (NTC-related complex), composed of NTR1, NTR2 and PRP43. Interacts with CLF1 and NTR2. Interacts with PRP43 and PRP45.

It localises to the cytoplasm. Its subcellular location is the nucleus. Functionally, involved in pre-mRNA splicing and spliceosome disassembly. Promotes release of excised lariat intron from the spliceosome by acting as a receptor for PRP43. This targeting of PRP43 leads to disassembly of the spliceosome with the separation of the U2, U5, U6 snRNPs and the NTC complex. The chain is Pre-mRNA-splicing factor SPP382 (SPP382) from Saccharomyces cerevisiae (strain ATCC 204508 / S288c) (Baker's yeast).